Reading from the N-terminus, the 253-residue chain is uncharacterized protein (253 aa).

8 residues coordinate NADP(+): isoleucine 17, serine 36, aspartate 62, asparagine 89, tyrosine 158, lysine 162, valine 191, and threonine 193. The active-site Proton donor is the tyrosine 158. Catalysis depends on lysine 162, which acts as the Lowers pKa of active site Tyr.

Belongs to the short-chain dehydrogenases/reductases (SDR) family.

Its subcellular location is the cytoplasm. The protein resides in the nucleus. This is an uncharacterized protein from Schizosaccharomyces pombe (strain 972 / ATCC 24843) (Fission yeast).